The sequence spans 271 residues: Formamidopyrimidine-DNA glycosylase (271 aa).

Catalysis depends on Pro-2, which acts as the Schiff-base intermediate with DNA. Glu-3 functions as the Proton donor in the catalytic mechanism. Lys-57 serves as the catalytic Proton donor; for beta-elimination activity. DNA contacts are provided by His-90, Arg-109, and Lys-151. The segment at 236-270 adopts an FPG-type zinc-finger fold; that stretch reads HVYGRGSKSCTHCGNLLSEIRLGQRTTVFCGLCQT. The active-site Proton donor; for delta-elimination activity is the Arg-260.

This sequence belongs to the FPG family. As to quaternary structure, monomer. Zn(2+) serves as cofactor.

It catalyses the reaction Hydrolysis of DNA containing ring-opened 7-methylguanine residues, releasing 2,6-diamino-4-hydroxy-5-(N-methyl)formamidopyrimidine.. It carries out the reaction 2'-deoxyribonucleotide-(2'-deoxyribose 5'-phosphate)-2'-deoxyribonucleotide-DNA = a 3'-end 2'-deoxyribonucleotide-(2,3-dehydro-2,3-deoxyribose 5'-phosphate)-DNA + a 5'-end 5'-phospho-2'-deoxyribonucleoside-DNA + H(+). In terms of biological role, involved in base excision repair of DNA damaged by oxidation or by mutagenic agents. Acts as a DNA glycosylase that recognizes and removes damaged bases. Has a preference for oxidized purines, such as 7,8-dihydro-8-oxoguanine (8-oxoG). Has AP (apurinic/apyrimidinic) lyase activity and introduces nicks in the DNA strand. Cleaves the DNA backbone by beta-delta elimination to generate a single-strand break at the site of the removed base with both 3'- and 5'-phosphates. In Shewanella denitrificans (strain OS217 / ATCC BAA-1090 / DSM 15013), this protein is Formamidopyrimidine-DNA glycosylase.